Reading from the N-terminus, the 578-residue chain is Vitelline membrane-like protein (578 aa).

Residues 1-21 form the signal peptide; that stretch reads MCGRRLLFLAAFGCLLANAFS. Residues 72 to 452 are 45 X 8 AA approximate tandem repeats of [PS]-[AS]-Y-S-A-P-A-[AS]; it reads QGYSAPAAPV…AAPSYSAPAS (381 aa). Disordered regions lie at residues 133–442 and 487–514; these read ASSS…YSAP and SGSP…ASKS. Residues 549–578 form the VM domain; that stretch reads SLPSPPCPKNYVFSCSSVFTPAPCSQGYGY.

Interacts with Vm26Aa and Vm26Ab; forms part of a disulfide-linked network within the vitelline membrane of stage 10 egg chambers. In terms of processing, becomes part of a disulfide-linked network including other vitelline membrane proteins, including Vm26Aa and Vm26Ab, during vitelline membrane biogenesis and maturation. Sulfated by pip; probably involved in embryo dorsal-ventral axis determination. Sulfation by pip may occur on covalently bound glycosaminoglycans. In terms of tissue distribution, secreted into the perivitelline space and becomes stably incorporated into the vitelline membrane (at protein level). Expressed throughout the follicle cell layer of stage 10 egg chambers.

The protein localises to the secreted. Its subcellular location is the extracellular space. The protein resides in the extracellular matrix. Major early eggshell protein secreted by folicle cells into the perivitelline space and incorporated into the vitelline membrane. Localized sulfation by pip may be involved in embryo dorsal-ventral axis determination. The chain is Vitelline membrane-like protein from Drosophila melanogaster (Fruit fly).